The sequence spans 513 residues: Ribonuclease Y (513 aa).

Residues 3–23 form a helical membrane-spanning segment; the sequence is IGTLLLFTFLGLVAGATAVWL. The segment at 77–96 is disordered; it reads LQSVESKLKSREQTLNQRQE. Over residues 82 to 96 the composition is skewed to basic and acidic residues; it reads SKLKSREQTLNQRQE. Residues 203–263 form the KH domain; it reads SVTVFHIESD…VRREIARLAL (61 aa). In terms of domain architecture, HD spans 329–422; it reads LLQHSRETAN…VQVCDAISGA (94 aa).

It belongs to the RNase Y family.

Its subcellular location is the cell membrane. In terms of biological role, endoribonuclease that initiates mRNA decay. The protein is Ribonuclease Y of Porphyromonas gingivalis (strain ATCC BAA-308 / W83).